The chain runs to 414 residues: Histidine--tRNA ligase (414 aa).

It belongs to the class-II aminoacyl-tRNA synthetase family. In terms of assembly, homodimer.

The protein localises to the cytoplasm. The enzyme catalyses tRNA(His) + L-histidine + ATP = L-histidyl-tRNA(His) + AMP + diphosphate + H(+). The protein is Histidine--tRNA ligase (hisS) of Mycoplasma pneumoniae (strain ATCC 29342 / M129 / Subtype 1) (Mycoplasmoides pneumoniae).